We begin with the raw amino-acid sequence, 455 residues long: GTPase Der (455 aa).

EngA-type G domains are found at residues 3–167 (FTIA…PEPA) and 184–359 (IRVA…AVWN). GTP is bound by residues 9–16 (GRPNVGKS), 56–60 (DTAGL), 119–122 (NKSE), 190–197 (GRPNAGKS), 237–241 (DTAGL), and 302–305 (NKWD). The region spanning 360 to 444 (RRVATALLNR…PIRITLREKA (85 aa)) is the KH-like domain.

The protein belongs to the TRAFAC class TrmE-Era-EngA-EngB-Septin-like GTPase superfamily. EngA (Der) GTPase family. In terms of assembly, associates with the 50S ribosomal subunit.

Its function is as follows. GTPase that plays an essential role in the late steps of ribosome biogenesis. The chain is GTPase Der from Nitrobacter winogradskyi (strain ATCC 25391 / DSM 10237 / CIP 104748 / NCIMB 11846 / Nb-255).